The sequence spans 1125 residues: Kinase and exchange factor for Rac B (1125 aa).

Disordered regions lie at residues 50 to 175, 247 to 287, and 322 to 362; these read VTGG…ASIN, SVPG…GGKF, and KTRD…VNSD. The span at 59-91 shows a compositional bias: low complexity; that stretch reads NNQQQQQNNNNNNNNNNNNNNNNNNNNNNNNNN. The segment covering 92-106 has biased composition (polar residues); sequence SGEISSNNSTPSILF. Positions 113–124 are enriched in pro residues; the sequence is TAPPAPPQPTTP. A compositionally biased stretch (low complexity) spans 137–161; the sequence is NINQQPIGGVNNNNNNNNKDSPSNK. Residues 380-571 form the DH domain; it reads KRRQVSLQIL…KSTVDYVKEK (192 aa). Positions 601–822 constitute a PH domain; the sequence is RYVREGMLTE…WIQAIHANII (222 aa). Disordered stretches follow at residues 693–729 and 761–791; these read INNM…SNNN and SNNN…YSNG. Positions 694–729 are enriched in low complexity; sequence NNMTNNDSKSKNNNNNNSNGNNNNNNINSNSNSNNN. The region spanning 848 to 1117 is the Protein kinase domain; that stretch reads IKLCEQIGSG…QLVQKLTKML (270 aa). Residues 854–862 and K876 contribute to the ATP site; that span reads IGSGGSGCT. D971 serves as the catalytic Proton acceptor.

Belongs to the protein kinase superfamily. STE Ser/Thr protein kinase family. It depends on Mg(2+) as a cofactor.

The enzyme catalyses L-seryl-[protein] + ATP = O-phospho-L-seryl-[protein] + ADP + H(+). It catalyses the reaction L-threonyl-[protein] + ATP = O-phospho-L-threonyl-[protein] + ADP + H(+). The protein is Kinase and exchange factor for Rac B of Dictyostelium discoideum (Social amoeba).